The following is an 81-amino-acid chain: Beta-defensin 34 (81 aa).

A signal peptide spans 1-20 (MKTFLFLFAVLFFWSQPRMH). Intrachain disulfides connect C28-C55, C35-C49, and C39-C56. A compositionally biased stretch (polar residues) spans 62-72 (CGRSKGNQSDE). The interval 62–81 (CGRSKGNQSDEGSGHMGTRG) is disordered.

The protein belongs to the beta-defensin family. As to expression, only expressed in epididymis (caput, corpus and cauda).

The protein resides in the secreted. Its function is as follows. Has antibacterial activity. The polypeptide is Beta-defensin 34 (Defb34) (Mus musculus (Mouse)).